We begin with the raw amino-acid sequence, 643 residues long: Phosphoenolpyruvate carboxykinase [GTP] (643 aa).

Residues Arg102 and 253 to 255 contribute to the substrate site; that span reads YGG. Residues Lys262 and His282 each contribute to the Mn(2+) site. A substrate-binding site is contributed by Ser304. GTP is bound at residue 305–310; the sequence is ACGKTN. Cys306 is an active-site residue. Mn(2+) is bound at residue Asp329. 422–424 is a binding site for substrate; sequence NSR. Residues Arg424, Arg455, and 548–551 each bind GTP; that span reads YGDN.

It belongs to the phosphoenolpyruvate carboxykinase [GTP] family. As to quaternary structure, monomer. Mn(2+) is required as a cofactor.

It carries out the reaction oxaloacetate + GTP = phosphoenolpyruvate + GDP + CO2. Functionally, in parasitic nematodes PEPCK carboxylates phosphoenolpyruvate to oxaloacetate thus introducing the products of glycolysis to mitochondrial metabolism. Catalyzes the conversion of oxaloacetate (OAA) to phosphoenolpyruvate (PEP), the rate-limiting step in the metabolic pathway that produces glucose from lactate and other precursors derived from the citric acid cycle. This is Phosphoenolpyruvate carboxykinase [GTP] (PEPCK) from Ascaris suum (Pig roundworm).